Reading from the N-terminus, the 251-residue chain is Ubiquinone/menaquinone biosynthesis C-methyltransferase UbiE (251 aa).

Residues Thr-74, Asp-95, 123-124, and Ser-140 each bind S-adenosyl-L-methionine; that span reads NA.

It belongs to the class I-like SAM-binding methyltransferase superfamily. MenG/UbiE family.

It carries out the reaction a 2-demethylmenaquinol + S-adenosyl-L-methionine = a menaquinol + S-adenosyl-L-homocysteine + H(+). It catalyses the reaction a 2-methoxy-6-(all-trans-polyprenyl)benzene-1,4-diol + S-adenosyl-L-methionine = a 5-methoxy-2-methyl-3-(all-trans-polyprenyl)benzene-1,4-diol + S-adenosyl-L-homocysteine + H(+). It functions in the pathway quinol/quinone metabolism; menaquinone biosynthesis; menaquinol from 1,4-dihydroxy-2-naphthoate: step 2/2. Its pathway is cofactor biosynthesis; ubiquinone biosynthesis. Its function is as follows. Methyltransferase required for the conversion of demethylmenaquinol (DMKH2) to menaquinol (MKH2) and the conversion of 2-polyprenyl-6-methoxy-1,4-benzoquinol (DDMQH2) to 2-polyprenyl-3-methyl-6-methoxy-1,4-benzoquinol (DMQH2). This Klebsiella pneumoniae (strain 342) protein is Ubiquinone/menaquinone biosynthesis C-methyltransferase UbiE.